The sequence spans 554 residues: Trimethyltridecatetraene synthase (554 aa).

A helical transmembrane segment spans residues 1 to 21 (MSAAVALAVILAVYVVLRYIS). Position 464 (C464) interacts with heme.

This sequence belongs to the cytochrome P450 family. The cofactor is heme.

The protein localises to the membrane. The catalysed reaction is (6E,10E)-geranyllinalool + reduced [NADPH--hemoprotein reductase] + O2 = (3E,7E)-4,8,12-trimethyltrideca 1,3,7,11-tetraene + but-3-en-2-one + oxidized [NADPH--hemoprotein reductase] + 2 H2O + H(+). Its pathway is secondary metabolite biosynthesis; terpenoid biosynthesis. Its function is as follows. Component of the volatile terpenes biosynthesis pathways. Converts mainly geranyllinalool to trimethyltridecatetraene (TMTT). This is Trimethyltridecatetraene synthase from Zea mays (Maize).